The primary structure comprises 356 residues: Replication factor C subunit 3 (356 aa).

Lysine 20 bears the N6-acetyllysine mark. Serine 125 is modified (phosphoserine).

This sequence belongs to the activator 1 small subunits family. As to quaternary structure, subunit of the RFC complex, an heteropentameric complex consisting of a large subunit RFC1 and four small subunits RFC2, RFC3, RFC4 and RFC5; the RFC complex interacts with PCNA. Forms an heterotetrameric complex with RFC2, RFC4 and RFC5; this complex has ATPase activity but is not stimulated by PCNA. The heterotetramer of subunits RFC2, RFC3, RFC4 and RFC5 interacts with RAD17. Interacts with CNTD1; this interaction facilitates crossover formation.

It is found in the nucleus. Subunit of the replication factor C (RFC) complex which acts during elongation of primed DNA templates by DNA polymerases delta and epsilon, and is necessary for ATP-dependent loading of proliferating cell nuclear antigen (PCNA) onto primed DNA. In Homo sapiens (Human), this protein is Replication factor C subunit 3 (RFC3).